The sequence spans 321 residues: Necdin (321 aa).

Residues 1–96 are disordered; sequence MSEQSKDLSD…QPGPAPPAPA (96 aa). Positions 20-35 are enriched in low complexity; the sequence is SEVHSSPGVSEGVPPS. An MAGE domain is found at 98–297; the sequence is LVQKAHELMW…QAWPSRYREA (200 aa).

As to quaternary structure, binds to the transactivation domains of E2F1 and p53. Binds also SV40 large T antigen and adenovirus E1A. Interacts with nucleobindin 1 and 2. Almost ubiquitous. Detected in fetal brain, lung, liver and kidney; in adult heart, brain, placenta, lung, liver, skeletal muscle, kidney, pancreas, spleen, thymus, prostate, testis, ovary, small intestine and colon. Not detected in peripheral blood leukocytes. In brain, restricted to post-mitotic neurons.

It localises to the perikaryon. Its subcellular location is the nucleus. Functionally, growth suppressor that facilitates the entry of the cell into cell cycle arrest. Functionally similar to the retinoblastoma protein it binds to and represses the activity of cell-cycle-promoting proteins such as SV40 large T antigen, adenovirus E1A, and the transcription factor E2F. Necdin also interacts with p53 and works in an additive manner to inhibit cell growth. Also functions as a transcription factor and directly binds to specific guanosine-rich DNA sequences. This is Necdin (NDN) from Homo sapiens (Human).